We begin with the raw amino-acid sequence, 628 residues long: MGRKKFEAFGFVCLISLLLLFNSLWLASSNMEGDALHSLRANLVDPNNVLQSWDPTLVNPCTWFHVTCNNENSVIRVDLGNADLSGQLVPQLGQLKNLQYLELYSNNITGPVPSDLGNLTNLVSLDLYLNSFTGPIPDSLGKLFKLRFLRLNNNSLTGPIPMSLTNIMTLQVLDLSNNRLSGSVPDNGSFSLFTPISFANNLDLCGPVTSRPCPGSPPFSPPPPFIPPPIVPTPGGYSATGAIAGGVAAGAALLFAAPALAFAWWRRRKPQEFFFDVPAEEDPEVHLGQLKRFSLRELQVATDSFSNKNILGRGGFGKVYKGRLADGTLVAVKRLKEERTPGGELQFQTEVEMISMAVHRNLLRLRGFCMTPTERLLVYPYMANGSVASCLRERPPSQLPLAWSIRQQIALGSARGLSYLHDHCDPKIIHRDVKAANILLDEEFEAVVGDFGLARLMDYKDTHVTTAVRGTIGHIAPEYLSTGKSSEKTDVFGYGIMLLELITGQRAFDLARLANDDDVMLLDWVKGLLKEKKLEMLVDPDLQSNYTEAEVEQLIQVALLCTQSSPMERPKMSEVVRMLEGDGLAEKWDEWQKVEVLRQEVELSSHPTSDWILDSTDNLHAMELSGPR.

A signal peptide spans 1-29; it reads MGRKKFEAFGFVCLISLLLLFNSLWLASS. Over 30–241 the chain is Extracellular; that stretch reads NMEGDALHSL…PTPGGYSATG (212 aa). The PSKR1 binding stretch occupies residues 45-85; sequence DPNNVLQSWDPTLVNPCTWFHVTCNNENSVIRVDLGNADLS. The interval 56–58 is CLE44 binding; that stretch reads TLV. An intrachain disulfide couples Cys-61 to Cys-68. 2 leucine-rich repeat receptor-like protein kinase binding regions span residues 62–81 and 100–105; these read TWFHVTCNNENSVIRVDLGN and YLELYS. 64–65 contributes to the brassinolide binding site; the sequence is FH. LRR repeat units lie at residues 95 to 119, 121 to 143, 144 to 167, and 168 to 192; these read LKNLQYLELYSNNITGPVPSDLGNL, NLVSLDLYLNSFTGPIPDSLGKL, FKLRFLRLNNNSLTGPIPMSLTNI, and MTLQVLDLSNNRLSGSVPDNGSFSL. N-linked (GlcNAc...) asparagine glycans are attached at residues Asn-107 and Asn-118. Leucine-rich repeat receptor-like protein kinase binding stretches follow at residues 126–129 and 148–150; these read DLYL and FLR. 2 N-linked (GlcNAc...) asparagine glycosylation sites follow: Asn-153 and Asn-187. The tract at residues 174 to 197 is leucine-rich repeat receptor-like protein kinase binding; it reads DLSNNRLSGSVPDNGSFSLFTPIS. Cys-205 and Cys-213 form a disulfide bridge. A helical membrane pass occupies residues 242–262; it reads AIAGGVAAGAALLFAAPALAF. Residues 263-628 are Cytoplasmic-facing; the sequence is AWWRRRKPQE…LHAMELSGPR (366 aa). Thr-302 bears the Phosphothreonine mark. In terms of domain architecture, Protein kinase spans 305–592; the sequence is FSNKNILGRG…GLAEKWDEWQ (288 aa). Position 311 to 319 (311 to 319) interacts with ATP; the sequence is LGRGGFGKV. The residue at position 328 (Thr-328) is a Phosphothreonine. Lys-333 contacts ATP. Ser-386 and Ser-389 each carry phosphoserine. Asp-432 functions as the Proton acceptor in the catalytic mechanism. 4 positions are modified to phosphothreonine: Thr-462, Thr-465, Thr-466, and Thr-471. Tyr-479 carries the phosphotyrosine modification. The residue at position 481 (Ser-481) is a Phosphoserine. A Phosphothreonine modification is found at Thr-482. Ser-486 bears the Phosphoserine mark. Position 562 is a phosphothreonine (Thr-562). Ser-604 carries the post-translational modification Phosphoserine. Thr-616 is subject to Phosphothreonine. A Phosphoserine modification is found at Ser-625.

Belongs to the protein kinase superfamily. Ser/Thr protein kinase family. As to quaternary structure, homo- and heterodimer. Component of the SERK1 signaling complex, composed of KAPP, CDC48A, GRF6 or GRF7, SERK1, SERK2, SERK3/BAK1 and BRI1. Bind to BRI1 in a brassinolide-dependent manner. Heterodimer with PSKR1. Interacts with the EF-Tu receptor EFR and FLS2 in a specific ligand-induced manner. Interacts with ERECTA in a EPF2-induced manner. Interacts with ERL1 in a EPF1-induced manner. Interacts with TMM. In the presence of the signal peptide RGF1, interacts with RGI3/RGFR1 and RGI4/RGFR2/SKM2. Binds to the peptide CLE44 in the presence of TDR. Autophosphorylated. As to expression, expressed in flowers, tapetum, developing microspores, all cells of the embryo sac, provascular strands and developing vascular bundles. Low expression in adult vascular tissue.

Its subcellular location is the cell membrane. The catalysed reaction is L-seryl-[protein] + ATP = O-phospho-L-seryl-[protein] + ADP + H(+). It carries out the reaction L-threonyl-[protein] + ATP = O-phospho-L-threonyl-[protein] + ADP + H(+). Serine/threonine-kinase involved in brassinosteroid-dependent and -independent signaling pathways. Acts redundantly with SERK1 as a control point for sporophytic development controlling male gametophyte production. Serves as coreceptor to small peptide (e.g. RGF1 and CLE44) signaling. Involved in the perception of phytosulfokine and subsequent signal transduction. The protein is Somatic embryogenesis receptor kinase 2 of Arabidopsis thaliana (Mouse-ear cress).